The following is a 310-amino-acid chain: Transcription initiation factor TFIID subunit 8 (310 aa).

The disordered stretch occupies residues 1–30 (MADAAATAGAGGSGTRSGSKQSTNPADNYH). Ala-2 carries the post-translational modification N-acetylalanine. One can recognise a Histone-fold; involved in forming hexamer structure in TFIID complex domain in the interval 35-102 (RTLQVVVSSL…IVVTLVEMGF (68 aa)). The residue at position 130 (Thr-130) is a Phosphothreonine. The interval 262–310 (DSGAEKENTSVLQQNPSLSGSRNGEENIIDNPYLRPVKKPKIRRKKSLS) is disordered. A compositionally biased stretch (polar residues) spans 270–283 (TSVLQQNPSLSGSR). Position 271 is a phosphoserine (Ser-271). Residues 294–307 (YLRPVKKPKIRRKK) carry the Nuclear localization signal motif. The span at 297 to 310 (PVKKPKIRRKKSLS) shows a compositional bias: basic residues.

It belongs to the TAF8 family. As to quaternary structure, component of the TFIID basal transcription factor complex, composed of TATA-box-binding protein TBP, and a number of TBP-associated factors (TAFs), including TAF1, TAF2, TAF3, TAF4, TAF5, TAF6, TAF7, TAF8, TAF9, TAF10, TAF11, TAF12 and TAF13. Interacts with TBP, TAF1, TAF6, TAF10, TAF11 and TAF13. Component also of a small TAF complex (SMAT) containing TAF8, TAF10 and SUPT7L. Forms a heterodimer with TAF10. Interaction with TAF10 is mediated mainly via its histone fold domain while interaction with SUPT7L is via its C-terminal region.

The protein resides in the nucleus. It localises to the cytoplasm. Its function is as follows. The TFIID basal transcription factor complex plays a major role in the initiation of RNA polymerase II (Pol II)-dependent transcription. TFIID recognizes and binds promoters with or without a TATA box via its subunit TBP, a TATA-box-binding protein, and promotes assembly of the pre-initiation complex (PIC). The TFIID complex consists of TBP and TBP-associated factors (TAFs), including TAF1, TAF2, TAF3, TAF4, TAF5, TAF6, TAF7, TAF8, TAF9, TAF10, TAF11, TAF12 and TAF13. The TFIID complex structure can be divided into 3 modules TFIID-A, TFIID-B, and TFIID-C. TAF8 is involved in forming the TFIID-B module, together with TAF5. Mediates both basal and activator-dependent transcription. Plays a role in the differentiation of preadipocyte fibroblasts to adipocytes, however, does not seem to play a role in differentiation of myoblasts. Required for the integration of TAF10 in the TAF complex. May be important for survival of cells of the inner cell mass which constitute the pluripotent cell population of the early embryo. In Homo sapiens (Human), this protein is Transcription initiation factor TFIID subunit 8 (TAF8).